Consider the following 231-residue polypeptide: MTDNDDRIKLEASWKEALREEFDKPYMKQLGEFLRQEKAAGKAIFPPGPLIFNALNTTPLENVKVVIIGQDPYHGPGQAHGLCFSVQPGVPTPPSLQNIYKELNRDLNIPIPNNGYLQRWAEQGVLLLNTSLTVEQAKAGSHANAGWQPFTDRVIEVVNERCERLVFLLWGSHAQSKQKLIDPQRHLILKSAHPSPLSAYRGFLGNGHFSRTNKFLEQNGKTPIDWSLPDL.

Asp-71 acts as the Proton acceptor in catalysis.

It belongs to the uracil-DNA glycosylase (UDG) superfamily. UNG family.

The protein resides in the cytoplasm. The catalysed reaction is Hydrolyzes single-stranded DNA or mismatched double-stranded DNA and polynucleotides, releasing free uracil.. Its function is as follows. Excises uracil residues from the DNA which can arise as a result of misincorporation of dUMP residues by DNA polymerase or due to deamination of cytosine. The protein is Uracil-DNA glycosylase of Pseudomonas aeruginosa (strain UCBPP-PA14).